A 313-amino-acid chain; its full sequence is Dehydrodolichyl diphosphate synthase CPT5, chloroplastic (313 aa).

The transit peptide at 1 to 42 directs the protein to the chloroplast; it reads MAFSFQLQQVFPFPVKFCSQPKSIKLQIFPNLTKRLPIHPLA. Asp-89 is a catalytic residue.

This sequence belongs to the UPP synthase family. Requires Mg(2+) as cofactor. As to expression, expressed in leaf trichomes, stem trichomes and old leaves. Expressed at low levels in young leaves and flowers.

It localises to the plastid. The protein localises to the chloroplast. The catalysed reaction is n isopentenyl diphosphate + (2E,6E)-farnesyl diphosphate = a di-trans,poly-cis-polyprenyl diphosphate + n diphosphate. In terms of biological role, catalyzes cis-prenyl chain elongation to produce the polyprenyl backbone of dolichol, a glycosyl carrier-lipid required for the biosynthesis of several classes of glycoprotein. This Solanum lycopersicum (Tomato) protein is Dehydrodolichyl diphosphate synthase CPT5, chloroplastic.